The sequence spans 208 residues: Platelet glycoprotein Ib beta chain (208 aa).

An N-terminal signal peptide occupies residues M1–C26. 2 disulfides stabilise this stretch: C26/C32 and C30/C39. One can recognise an LRRNT domain in the interval P27–V55. Residues P27 to C147 are Extracellular-facing. The LRR repeat unit spans residues L60–T83. An N-linked (GlcNAc...) asparagine glycan is attached at N66. Positions N89–P143 constitute an LRRCT domain. 2 cysteine pairs are disulfide-bonded: C93–C118 and C95–C141. A helical transmembrane segment spans residues W148–L172. Residues C173–S208 are Cytoplasmic-facing. S193 is modified (phosphoserine; by PKA). Position 195 is a phosphothreonine (T195).

In terms of assembly, two GP-Ib beta are disulfide-linked to one GP-Ib alpha. GP-IX is complexed with the GP-Ib heterodimer via a non covalent linkage. Interacts with TRAF4.

It is found in the membrane. Its function is as follows. Gp-Ib, a surface membrane protein of platelets, participates in the formation of platelet plugs by binding to von Willebrand factor, which is already bound to the subendothelium. The protein is Platelet glycoprotein Ib beta chain (GP1BB) of Papio cynocephalus (Yellow baboon).